A 530-amino-acid chain; its full sequence is Vesicular acetylcholine transporter (530 aa).

Residues 1-33 (MEPTAPTGQARAAATKLSEAVGAALQEPQRQRR) are Cytoplasmic-facing. A helical transmembrane segment spans residues 34–54 (LVLVIVCVALLLDNMLYMVIV). Residues 55-125 (PIVPDYIAHM…PTESEDVKIG (71 aa)) lie on the Lumenal, vesicle side of the membrane. N-linked (GlcNAc...) asparagine glycosylation is found at Asn-89 and Asn-96. The chain crosses the membrane as a helical span at residues 126 to 146 (VLFASKAILQLLVNPLSGPFI). The Cytoplasmic portion of the chain corresponds to 147–152 (DRMSYD). A helical membrane pass occupies residues 153 to 173 (VPLLIGLGVMFASTVMFAFAE). Residues 174–182 (DYATLFAAR) are Lumenal, vesicle-facing. A helical membrane pass occupies residues 183 to 203 (SLQGLGSAFADTSGIAMIADK). Residues 204–213 (YPEEPERSRA) are Cytoplasmic-facing. The chain crosses the membrane as a helical span at residues 214–234 (LGVALAFISFGSLVAPPFGGI). Residues 235–242 (LYEFAGKR) are Lumenal, vesicle-facing. The helical transmembrane segment at 243–263 (VPFLVLAAVSLFDALLLLAVA) threads the bilayer. The Cytoplasmic portion of the chain corresponds to 264 to 289 (KPFSAAARARANLPVGTPIHRLMLDP). A helical membrane pass occupies residues 290–310 (YIAVVAGALTTCNIPLAFLEP). The Lumenal, vesicle segment spans residues 311 to 325 (TIATWMKHTMAASEW). The helical transmembrane segment at 326–346 (EMGMVWLPAFVPHVLGVYLTV) threads the bilayer. At 347-356 (RLAARYPHLQ) the chain is on the cytoplasmic side. A helical transmembrane segment spans residues 357–377 (WLYGALGLAVIGVSSCVVPAC). Over 378–388 (RSFAPLVVSLC) the chain is Lumenal, vesicle. The helical transmembrane segment at 389–409 (GLCFGIALVDTALLPTLAFLV) threads the bilayer. The Cytoplasmic portion of the chain corresponds to 410–422 (DVRHVSVYGSVYA). Residues 423–443 (IADISYSVAYALGPIVAGHIV) form a helical membrane-spanning segment. The Lumenal, vesicle segment spans residues 444–447 (HSLG). The chain crosses the membrane as a helical span at residues 448–468 (FEQLSLGMGLANLLYAPVLLL). At 469-530 (LRNVGLLTRS…EDDYNYYSRS (62 aa)) the chain is on the cytoplasmic side. Residues 471–530 (NVGLLTRSRSERDVLLDEPPQGLYDAVRLREVQGKDGGEPCSPPGPFDGCEDDYNYYSRS) are mediates interaction with SEC14L1. The disordered stretch occupies residues 504 to 530 (GKDGGEPCSPPGPFDGCEDDYNYYSRS).

Belongs to the major facilitator superfamily. Vesicular transporter family. In terms of assembly, interacts with SEC14L1. In terms of tissue distribution, high expression in all major cholinergic cell groups, including peripheral postganglionic parasympathetic cells, preganglionic sympathetic and parasympathetic cells, ventral spinal cord and brainstem motoneurons, cell groups in the basal forebrain, the habenula and the corpus striatum. Weakly expressed in the cortex and hippocampus.

It is found in the cytoplasmic vesicle. Its subcellular location is the secretory vesicle. The protein localises to the synaptic vesicle membrane. It catalyses the reaction acetylcholine(out) + 2 H(+)(in) = acetylcholine(in) + 2 H(+)(out). It carries out the reaction choline(in) + 2 H(+)(out) = choline(out) + 2 H(+)(in). The enzyme catalyses serotonin(in) + 2 H(+)(out) = serotonin(out) + 2 H(+)(in). With respect to regulation, potently inhibited by L-vesamicol. Electrogenic antiporter that exchanges one cholinergic neurotransmitter, acetylcholine or choline, with two intravesicular protons across the membrane of synaptic vesicles. Uses the electrochemical proton gradient established by the V-type proton-pump ATPase to store neurotransmitters inside the vesicles prior to their release via exocytosis. Determines cholinergic vesicular quantal size at presynaptic nerve terminals in developing neuro-muscular junctions with an impact on motor neuron differentiation and innervation pattern. Part of forebrain cholinergic system, regulates hippocampal synapse transmissions that underlie spatial memory formation. Can transport serotonin. In Rattus norvegicus (Rat), this protein is Vesicular acetylcholine transporter (Slc18a3).